Here is a 677-residue protein sequence, read N- to C-terminus: Protein hook (677 aa).

The region spanning 6–123 (NEMYYSLLEW…RLLQLVLGCA (118 aa)) is the Calponin-homology (CH) domain. Coiled-coil stretches lie at residues 135-436 (EIMC…KCGH) and 478-588 (QTAL…AKEV).

This sequence belongs to the hook family. As to quaternary structure, homodimer. Interacts with microtubules via its N-terminus.

It localises to the cytoplasm. The protein resides in the cytoskeleton. It is found in the endosome. Its subcellular location is the synapse. Involved in endocytic trafficking by stabilizing organelles of the endocytic pathway. Probably acts as a cytoskeletal linker protein required to tether endosome vesicles to the cytoskeleton. Involved in modulation of endocytosis at stages required for down-regulation of membrane proteins that control synapse size. Not involved in synaptic vesicle recycling. Required in R7 cells for boss endocytosis into multivesicular bodies (MVBs). Has a role in regulating adult longevity. The polypeptide is Protein hook (Drosophila pseudoobscura pseudoobscura (Fruit fly)).